The chain runs to 292 residues: Universal stress protein Mb2346c (292 aa).

The protein belongs to the universal stress protein A family.

In Mycobacterium bovis (strain ATCC BAA-935 / AF2122/97), this protein is Universal stress protein Mb2346c.